A 492-amino-acid polypeptide reads, in one-letter code: Protein nucleotidyltransferase YdiU (492 aa).

The ATP site is built by G91, G93, R94, K114, D126, G127, R180, and R187. D256 (proton acceptor) is an active-site residue. Mg(2+) contacts are provided by N257 and D266. D266 contacts ATP.

This sequence belongs to the SELO family. Requires Mg(2+) as cofactor. The cofactor is Mn(2+).

It catalyses the reaction L-seryl-[protein] + ATP = 3-O-(5'-adenylyl)-L-seryl-[protein] + diphosphate. It carries out the reaction L-threonyl-[protein] + ATP = 3-O-(5'-adenylyl)-L-threonyl-[protein] + diphosphate. The enzyme catalyses L-tyrosyl-[protein] + ATP = O-(5'-adenylyl)-L-tyrosyl-[protein] + diphosphate. The catalysed reaction is L-histidyl-[protein] + UTP = N(tele)-(5'-uridylyl)-L-histidyl-[protein] + diphosphate. It catalyses the reaction L-seryl-[protein] + UTP = O-(5'-uridylyl)-L-seryl-[protein] + diphosphate. It carries out the reaction L-tyrosyl-[protein] + UTP = O-(5'-uridylyl)-L-tyrosyl-[protein] + diphosphate. Its function is as follows. Nucleotidyltransferase involved in the post-translational modification of proteins. It can catalyze the addition of adenosine monophosphate (AMP) or uridine monophosphate (UMP) to a protein, resulting in modifications known as AMPylation and UMPylation. This Synechococcus elongatus (strain ATCC 33912 / PCC 7942 / FACHB-805) (Anacystis nidulans R2) protein is Protein nucleotidyltransferase YdiU.